We begin with the raw amino-acid sequence, 282 residues long: Pantothenate synthetase (282 aa).

Residue 30-37 participates in ATP binding; that stretch reads MGYLHEGH. Residue H37 is the Proton donor of the active site. Q61 is a binding site for (R)-pantoate. Q61 contacts beta-alanine. Position 147–150 (147–150) interacts with ATP; it reads GMKD. Q153 contacts (R)-pantoate. ATP contacts are provided by residues V176 and 184 to 187; that span reads KSSR.

It belongs to the pantothenate synthetase family. Homodimer.

Its subcellular location is the cytoplasm. It catalyses the reaction (R)-pantoate + beta-alanine + ATP = (R)-pantothenate + AMP + diphosphate + H(+). It functions in the pathway cofactor biosynthesis; (R)-pantothenate biosynthesis; (R)-pantothenate from (R)-pantoate and beta-alanine: step 1/1. Functionally, catalyzes the condensation of pantoate with beta-alanine in an ATP-dependent reaction via a pantoyl-adenylate intermediate. The polypeptide is Pantothenate synthetase (Bacillus cereus (strain AH187)).